Here is a 326-residue protein sequence, read N- to C-terminus: Malate dehydrogenase (326 aa).

Gly-12 to Ala-18 provides a ligand contact to NAD(+). The substrate site is built by Arg-93 and Arg-99. NAD(+)-binding positions include Asn-106, Gln-113, and Val-130–Asn-132. Positions 132 and 163 each coordinate substrate. His-188 (proton acceptor) is an active-site residue.

This sequence belongs to the LDH/MDH superfamily. MDH type 2 family.

It carries out the reaction (S)-malate + NAD(+) = oxaloacetate + NADH + H(+). Its function is as follows. Catalyzes the reversible oxidation of malate to oxaloacetate. This is Malate dehydrogenase from Chlamydia muridarum (strain MoPn / Nigg).